A 105-amino-acid polypeptide reads, in one-letter code: Protein FAM24A (105 aa).

An N-terminal signal peptide occupies residues 1–32 (MAKMFDLRTKIMIGIGSSLLVAAMVLLSVVFC).

Belongs to the FAM24 family.

The protein localises to the secreted. This chain is Protein FAM24A (FAM24A), found in Homo sapiens (Human).